A 293-amino-acid polypeptide reads, in one-letter code: AKT-interacting protein (293 aa).

Over residues 1–11 (MNPFWSMSTNA) the composition is skewed to polar residues. The segment at 1-44 (MNPFWSMSTNAGRKRSDGEEQSGSGEQRASPARPPFGKKQLPSI) is disordered. The 149-residue stretch at 75-223 (YLEYSLLAEF…VVDSVKLCNS (149 aa)) folds into the UBC core domain. Residues 260–293 (RPEDFNKGLPVSGLSWVKPGSTQPFSKEDNPLQT) are disordered.

This sequence belongs to the ubiquitin-conjugating enzyme family. FTS subfamily.

It is found in the cytoplasm. It localises to the cell membrane. Functionally, may function to promote vesicle trafficking and/or fusion. May also regulate apoptosis. The protein is AKT-interacting protein (aktip) of Danio rerio (Zebrafish).